The primary structure comprises 510 residues: Calcium-dependent lipid-binding protein (510 aa).

The chain crosses the membrane as a helical span at residues 1–21 (MGLISGILFGIIFGVALMAGW). 2 consecutive SMP-LTD domains span residues 66-248 (AFEQ…VPIG) and 66-250 (AFEQ…IGGI). Positions 226 to 488 (DDTVDTIVKD…FMGRTITGQS (263 aa)) are phospholipid binding. C2 domains are found at residues 242 to 362 (RIVV…ELEL) and 246 to 364 (PIGG…ELNL). The Ca(2+) site is built by Lys-278, Glu-279, Asp-285, Asp-333, Lys-334, Asp-335, Asp-339, and Glu-340. A coiled-coil region spans residues 390–417 (EFNKEEQMAALEDEKKIMEERKRLKEAG). The C2 3 domain occupies 461-500 (MVGSGFGAVGSGLSKAGRFMGRTITGQSSKRSGSSTPVNT). Residues 484 to 510 (ITGQSSKRSGSSTPVNTVPENDGAKQQ) form a disordered region.

It belongs to the synaptotagmin family. As to quaternary structure, interacts with the biotrophic pathogenic fungi Microbotryum violaceum effector MVLG_01732. It depends on Ca(2+) as a cofactor. As to expression, mostly expressed in rosette leaves and flowers, to lower extent, in cauline leaves, roots and stems, and, at low levels, in siliques.

It localises to the nucleus membrane. Functionally, may be involved in membrane trafficking. Acts as a repressor of abiotic stress (e.g. drought and salt) responses by binding specifically to the promoter of THAS1 to regulate its transcription. Binds to membrane lipid ceramides. The polypeptide is Calcium-dependent lipid-binding protein (Arabidopsis thaliana (Mouse-ear cress)).